The chain runs to 206 residues: MSHYSQAKFNLSAPDISHLSADQGIEVAFAGRSNAGKSSALNRLTRQKSLARTSKTPGRTQLINVFDLDEDRRLIDLPGYGYAKVPMAIKLKWQKSLGEYLQKRESLKGLVVLMDIRHPFKDLDQELIQWAVAADLPVLGLLTKADKLKSGKRKAQLLMAREASLAFCGDVTIHLFSSLNGLGLDNCERVLDKWFGYAQDEELEQE.

Residues 23-197 (QGIEVAFAGR…ERVLDKWFGY (175 aa)) form the EngB-type G domain. GTP-binding positions include 31 to 38 (GRSNAGKS), 58 to 62 (GRTQL), 76 to 79 (DLPG), 143 to 146 (TKAD), and 176 to 178 (FSS). Mg(2+) is bound by residues S38 and T60.

This sequence belongs to the TRAFAC class TrmE-Era-EngA-EngB-Septin-like GTPase superfamily. EngB GTPase family. The cofactor is Mg(2+).

Necessary for normal cell division and for the maintenance of normal septation. The protein is Probable GTP-binding protein EngB of Pseudoalteromonas atlantica (strain T6c / ATCC BAA-1087).